Consider the following 184-residue polypeptide: Putative rRNA methyltransferase YlbH (184 aa).

A disordered region spans residues 1–22 (MRVISGSKKGRSLKAVAGTSTR).

This sequence belongs to the methyltransferase superfamily. RsmD family.

May catalyze the S-adenosyl-L-methionine-dependent methylation of a specific base in rRNA. The polypeptide is Putative rRNA methyltransferase YlbH (ylbH) (Bacillus subtilis (strain 168)).